Here is a 139-residue protein sequence, read N- to C-terminus: MITADEQDHEFFDILYQQWAKSTGAEKTYWMPEEVEPPSICETDHGLEDHVIWAVNQETQDKDLVASHLSEADADFICGLHGAIPDLIRRLHEAIDEATSKDEARDRAEANLAEAYLENQGLQERIRELESELSYWSNR.

The sequence is that of Gene 39 protein (39) from Mycobacterium (Mycobacteriophage L5).